We begin with the raw amino-acid sequence, 348 residues long: MKISCEIIGKVDSGDVSKISMENNNGVVISTLTTGATLQEFLVPMETGALKNIVLGFSDFEDYYKNNLCACQSIGRVAGRIGKASYTHNMVLYSLPKNEGDNCLHGGPKGMQVQNWNYVTNLNDDYVETKFIRRLYSSVDGFPGDVTVSISYRLNNNNRLTILFEAFDVTESTVFNPTNHVYFNLSDKQDLSSHELQIYSDYRLELDSELIPTGQKINVDETNYDFRKTTDLLPRIEANNGFDDAFVVGGGTCDHVKEVAILHDKESGDGIEIFSNRNGLVIFTMDDIEDNIYFARDKGKMAKRREAIAMEAQTLPDAVNHKGFGDIILDKGHSVNYEIGFQYFNSSR.

A substrate-binding site is contributed by R80. Residue H180 is the Proton donor of the active site. Position 243 (D243) interacts with substrate. The Proton acceptor role is filled by E311.

It belongs to the aldose epimerase family.

The enzyme catalyses alpha-D-glucose = beta-D-glucose. It participates in carbohydrate metabolism; hexose metabolism. Functionally, mutarotase converts alpha-aldose to the beta-anomer. It is active on D-glucose, L-arabinose, D-xylose, D-galactose, maltose and lactose. The sequence is that of Aldose 1-epimerase (galM) from Streptococcus thermophilus.